We begin with the raw amino-acid sequence, 229 residues long: Large ribosomal subunit protein bL19cy (229 aa).

A chloroplast-targeting transit peptide spans 1-70 (MATSSHLLPQ…DSKKRKEFIA (70 aa)).

It belongs to the bacterial ribosomal protein bL19 family. As to quaternary structure, part of the 50S ribosomal subunit.

Its subcellular location is the plastid. It localises to the chloroplast. Its function is as follows. Located at the 30S-50S ribosomal subunit interface and binds directly to 23S ribosomal RNA. This Arabidopsis thaliana (Mouse-ear cress) protein is Large ribosomal subunit protein bL19cy.